Reading from the N-terminus, the 343-residue chain is Biotin synthase (343 aa).

Positions 36 to 254 (NTIQISTLLS…IAVARIMMPK (219 aa)) constitute a Radical SAM core domain. Residues Cys-51, Cys-55, and Cys-58 each coordinate [4Fe-4S] cluster. Residues Cys-95, Cys-126, Cys-186, and Arg-258 each coordinate [2Fe-2S] cluster.

The protein belongs to the radical SAM superfamily. Biotin synthase family. Homodimer. The cofactor is [4Fe-4S] cluster. [2Fe-2S] cluster is required as a cofactor.

It catalyses the reaction (4R,5S)-dethiobiotin + (sulfur carrier)-SH + 2 reduced [2Fe-2S]-[ferredoxin] + 2 S-adenosyl-L-methionine = (sulfur carrier)-H + biotin + 2 5'-deoxyadenosine + 2 L-methionine + 2 oxidized [2Fe-2S]-[ferredoxin]. Its pathway is cofactor biosynthesis; biotin biosynthesis; biotin from 7,8-diaminononanoate: step 2/2. Catalyzes the conversion of dethiobiotin (DTB) to biotin by the insertion of a sulfur atom into dethiobiotin via a radical-based mechanism. The protein is Biotin synthase of Buchnera aphidicola subsp. Acyrthosiphon pisum (strain 5A).